We begin with the raw amino-acid sequence, 108 residues long: Thioredoxin (108 aa).

Residues 2–108 (NKIIELTDQN…LKEFLDENIN (107 aa)) form the Thioredoxin domain. A disulfide bridge connects residues Cys32 and Cys35.

The protein belongs to the thioredoxin family.

Its function is as follows. Participates in various redox reactions through the reversible oxidation of its active center dithiol to a disulfide and catalyzes dithiol-disulfide exchange reactions. This is Thioredoxin (trxA) from Buchnera aphidicola subsp. Acyrthosiphon pisum (strain APS) (Acyrthosiphon pisum symbiotic bacterium).